The following is a 374-amino-acid chain: Guanine nucleotide-binding protein subunit alpha-15 (374 aa).

In terms of domain architecture, G-alpha spans 41–374; that stretch reads GELKLLLLGP…ARYLDEINLL (334 aa). Residues 44–57 are G1 motif; that stretch reads KLLLLGPGESGKST. Residues 49-56, 183-189, 208-212, 277-280, and Ala346 each bind GTP; these read GPGESGKS, LRSRMPT, DVGGQ, and NKTD. Mg(2+) is bound at residue Ser56. Residues 181–189 are G2 motif; the sequence is DVLRSRMPT. ADP-ribosylarginine; by cholera toxin is present on Arg186. Thr189 lines the Mg(2+) pocket. Residues 204 to 213 form a G3 motif region; the sequence is LRIVDVGGQK. Residues 273–280 are G4 motif; the sequence is ILFLNKTD. The interval 344–349 is G5 motif; sequence TCATDT.

The protein belongs to the G-alpha family. G(q) subfamily. As to quaternary structure, g proteins are composed of 3 units; alpha, beta and gamma. The alpha chain contains the guanine nucleotide binding site. In terms of tissue distribution, specifically expressed in hematopoietic cells. Expressed in epididymis (at protein level).

Its function is as follows. Guanine nucleotide-binding proteins (G proteins) are involved as modulators or transducers in various transmembrane signaling systems. The polypeptide is Guanine nucleotide-binding protein subunit alpha-15 (GNA15) (Homo sapiens (Human)).